Consider the following 74-residue polypeptide: Acyl carrier protein (74 aa).

Residues 1 to 73 form the Carrier domain; the sequence is MAVFEKVQEI…DLVAYVEEQA (73 aa). Position 35 is an O-(pantetheine 4'-phosphoryl)serine (Ser35).

This sequence belongs to the acyl carrier protein (ACP) family. 4'-phosphopantetheine is transferred from CoA to a specific serine of apo-ACP by AcpS. This modification is essential for activity because fatty acids are bound in thioester linkage to the sulfhydryl of the prosthetic group.

The protein localises to the cytoplasm. It participates in lipid metabolism; fatty acid biosynthesis. Its function is as follows. Carrier of the growing fatty acid chain in fatty acid biosynthesis. This Streptococcus pneumoniae serotype 4 (strain ATCC BAA-334 / TIGR4) protein is Acyl carrier protein.